The primary structure comprises 260 residues: Thiazole synthase (260 aa).

Residue Lys-96 is the Schiff-base intermediate with DXP of the active site. 1-deoxy-D-xylulose 5-phosphate-binding positions include Gly-157, 184–185, and 206–207; these read AG and NT.

Belongs to the ThiG family. In terms of assembly, homotetramer. Forms heterodimers with either ThiH or ThiS.

Its subcellular location is the cytoplasm. It carries out the reaction [ThiS sulfur-carrier protein]-C-terminal-Gly-aminoethanethioate + 2-iminoacetate + 1-deoxy-D-xylulose 5-phosphate = [ThiS sulfur-carrier protein]-C-terminal Gly-Gly + 2-[(2R,5Z)-2-carboxy-4-methylthiazol-5(2H)-ylidene]ethyl phosphate + 2 H2O + H(+). It functions in the pathway cofactor biosynthesis; thiamine diphosphate biosynthesis. In terms of biological role, catalyzes the rearrangement of 1-deoxy-D-xylulose 5-phosphate (DXP) to produce the thiazole phosphate moiety of thiamine. Sulfur is provided by the thiocarboxylate moiety of the carrier protein ThiS. In vitro, sulfur can be provided by H(2)S. The sequence is that of Thiazole synthase from Rhodopseudomonas palustris (strain BisB5).